A 252-amino-acid chain; its full sequence is Probable transcriptional regulatory protein Cagg_2594 (252 aa).

The segment covering 1–14 has biased composition (basic residues); the sequence is MSGHSKWHTIRRAK. The segment at 1 to 22 is disordered; sequence MSGHSKWHTIRRAKSANDQRRG.

It belongs to the TACO1 family.

It is found in the cytoplasm. The polypeptide is Probable transcriptional regulatory protein Cagg_2594 (Chloroflexus aggregans (strain MD-66 / DSM 9485)).